Consider the following 77-residue polypeptide: Liver-expressed antimicrobial peptide 2 (77 aa).

Positions 1 to 22 are cleaved as a signal peptide; the sequence is MWHLKLCAVLMIFLLLLGQIDG. The propeptide occupies 23-37; that stretch reads SPIPEVSSAKRRPRR. 2 cysteine pairs are disulfide-bonded: C54-C65 and C60-C70.

Belongs to the LEAP2 family.

It is found in the secreted. Functionally, has an antimicrobial activity. In Homo sapiens (Human), this protein is Liver-expressed antimicrobial peptide 2 (LEAP2).